Reading from the N-terminus, the 1237-residue chain is Anion exchange protein 2 (1237 aa).

Positions 1 to 237 are disordered; the sequence is MSSAPRRPAS…SYNLQERRRI (237 aa). The Cytoplasmic segment spans residues 1-703; the sequence is MSSAPRRPAS…SDFRDALDPQ (703 aa). 2 stretches are compositionally biased toward basic and acidic residues: residues 37–49 and 58–75; these read ELHR…RFEE and GGEE…EYHR. Composition is skewed to basic residues over residues 76–85 and 94–110; these read QSSHHIHHPL and RRRK…RRRP. Ser-113 is modified (phosphoserine). Positions 122–133 are enriched in acidic residues; that stretch reads EEGEEDEEEANE. Residues 137–151 show a composition bias toward low complexity; that stretch reads ARAPTEPSPASTPSS. A phosphoserine mark is found at Ser-144, Ser-170, and Ser-172. A compositionally biased stretch (gly residues) spans 206-215; the sequence is TAGGDNGGAS. Ser-239 is subject to Phosphoserine. Position 253 is a phosphothreonine (Thr-253). Lys-270 carries the N6-methyllysine modification. The disordered stretch occupies residues 281–316; that stretch reads RRHLVRKNAKGSAQSSREGREPGPTPRSRPRAPHKP. Ser-439 bears the Phosphoserine mark. Residues 445–464 are disordered; it reads SLLGHHHGQGAESDPHVTEP. The next 4 membrane-spanning stretches (helical) occupy residues 704–727, 733–770, 790–812, and 822–843; these read CVAA…GLLG, LIGV…LLVF, VWIG…SFLV, and IFAF…IKIF. The segment at 704–1237 is membrane (anion exchange); sequence CVAAVIFIYF…DEYNEMPMPV (534 aa). Residues 844-896 lie on the Extracellular side of the membrane; it reads QEHPLHGCSVSNSSETDSSENATWAGAGSTLGPANRSSAGQAGQGRPRGQPNT. Asn-855, Asn-864, and Asn-878 each carry an N-linked (GlcNAc...) asparagine glycan. A helical transmembrane segment spans residues 897-914; that stretch reads ALLSLVLMAGTFFIAFFL. At 915–929 the chain is on the cytoplasmic side; that stretch reads RKFKNSRFFPGRIRR. Transmembrane regions (helical) follow at residues 930 to 950, 984 to 1006, 1032 to 1053, 1087 to 1132, and 1159 to 1195; these read VIGD…DYSI, PFPV…LIFM, LLLI…LAAA, VTGL…IQFY, and MHLF…TVPL. The S-palmitoyl cysteine moiety is linked to residue Cys-1169.

The protein belongs to the anion exchanger (TC 2.A.31) family. In terms of tissue distribution, expressed in the ileum (at protein level).

It is found in the cell membrane. The protein localises to the apical cell membrane. The protein resides in the basolateral cell membrane. The catalysed reaction is hydrogencarbonate(in) + chloride(out) = hydrogencarbonate(out) + chloride(in). Its function is as follows. Sodium-independent anion exchanger which mediates the electroneutral exchange of chloride for bicarbonate ions across the cell membrane. Plays an important role in osteoclast differentiation and function. Regulates bone resorption and calpain-dependent actin cytoskeleton organization in osteoclasts via anion exchange-dependent control of pH. Essential for intracellular pH regulation in CD8(+) T-cells upon CD3 stimulation, modulating CD8(+) T-cell response. This chain is Anion exchange protein 2 (SLC4A2), found in Oryctolagus cuniculus (Rabbit).